The following is a 966-amino-acid chain: Leucine--tRNA ligase (966 aa).

Positions 41–51 match the 'HIGH' region motif; it reads PYLNGNLHAGH. The 'KMSKS' region signature appears at 632–636; that stretch reads KMSKS. Lysine 635 contacts ATP.

The protein belongs to the class-I aminoacyl-tRNA synthetase family.

The protein localises to the cytoplasm. The enzyme catalyses tRNA(Leu) + L-leucine + ATP = L-leucyl-tRNA(Leu) + AMP + diphosphate. The sequence is that of Leucine--tRNA ligase from Methanosarcina mazei (strain ATCC BAA-159 / DSM 3647 / Goe1 / Go1 / JCM 11833 / OCM 88) (Methanosarcina frisia).